An 879-amino-acid chain; its full sequence is Nuclear autoantigen Sp-100 (879 aa).

Residue A2 is modified to N-acetylalanine. S18 carries the post-translational modification Phosphoserine. Residues 33 to 149 (DLQRMFTEDQ…IYKGFENVIH (117 aa)) form the HSR domain. Positions 154–245 (LQESEEEERE…EQCAQKAEPT (92 aa)) are disordered. Position 157 is a phosphoserine (S157). Positions 165–168 (RSGL) match the D-box; recognition signal for CDC20-mediated degradation motif. Phosphoserine occurs at positions 171, 180, and 228. The segment covering 176–200 (TGENSFRSLTWPPSGSPSHAGTTPP) has biased composition (polar residues). The segment covering 207–228 (HPCETEQINAKRKDTTSDKDDS) has biased composition (basic and acidic residues). The segment covering 229–238 (LGSQQTNEQC) has biased composition (polar residues). K241 participates in a covalent cross-link: Glycyl lysine isopeptide (Lys-Gly) (interchain with G-Cter in SUMO2). Residues 284-297 (IQINSCSVRLVDIK) carry the PxVxL motif motif. K297 participates in a covalent cross-link: Glycyl lysine isopeptide (Lys-Gly) (interchain with G-Cter in SUMO). Residues K300 and K306 each participate in a glycyl lysine isopeptide (Lys-Gly) (interchain with G-Cter in SUMO2) cross-link. S331 and S362 each carry phosphoserine. The interval 333–478 (GSTDVDEPLE…SSSLRRGSGS (146 aa)) is sufficient to mediate interaction with ETS1. The tract at residues 345-386 (ISAPRSEPVINNDNPLESNDEKEGQEATCSRPQIVPEPMDFR) is disordered. Glycyl lysine isopeptide (Lys-Gly) (interchain with G-Cter in SUMO2) cross-links involve residues K366 and K387. A phosphoserine mark is found at S394, S407, S409, S410, and S451. Residues 401 to 596 (GQDHDFSESS…KRGPRIPKDE (196 aa)) are disordered. Residues 466 to 482 (ETCSSSLRRGSGSQPQE) show a composition bias toward polar residues. Positions 530-591 (SGKRRKKRRH…LKRRRKRGPR (62 aa)) are enriched in basic residues. Short sequence motifs (nuclear localization signal) lie at residues 536–553 (KRRH…RKKD) and 568–592 (KRWQ…GPRI). K594 is covalently cross-linked (Glycyl lysine isopeptide (Lys-Gly) (interchain with G-Cter in SUMO2)). An SAND domain is found at 595–676 (DENINFKQSE…KVLMENKFLP (82 aa)). 2 DNA-binding regions (HMG box) span residues 677–753 (EPPS…KTYI) and 769–837 (PKRP…AAYR). The Nuclear localization signal motif lies at 717–734 (KKCSETWKTIFAKEKGKF). The disordered stretch occupies residues 835–879 (AYRAKGKPNSAKKRVVKAEKSKKKKEEEEDEEDEQEEENEEDDDK). The span at 838-857 (AKGKPNSAKKRVVKAEKSKK) shows a compositional bias: basic residues. Over residues 861 to 879 (EEEDEEDEQEEENEEDDDK) the composition is skewed to acidic residues.

As to quaternary structure, homodimer; isoforms are able to heterodimerize. Interacts with members of the HP1 family of nonhistone chromosomal protein, such as CBX5 and CBX3 via the PxVxL motif. Interacts with ETS1; the interaction is direct and modulates ETS1 transcriptional activity. Interacts with the MRN complex which is composed of two heterodimers RAD50/MRE11 associated with a single NBN; recruits the complex to PML-related bodies. Interacts with HIPK2; positively regulates TP53-dependent transcription. Interacts with CASP8AP2; may negatively regulate CASP8AP2 export from the nucleus to the cytoplasm. Interacts with SUMO1P1/SUMO5. (Microbial infection) Interacts with Epstein-Barr virus EBNA-LP; this interaction is important for EBNA-LP coactivator activity. In terms of assembly, (Microbial infection) Interacts with human cytomegalovirus/HHV-5 protein UL123; may play a role in infection by the virus. Sumoylated. Sumoylation depends on a functional nuclear localization signal but is not necessary for nuclear import or nuclear body targeting. Post-translationally, sumoylated. Sumoylated with SUMO1. Sumoylation depends on a functional nuclear localization signal but is not necessary for nuclear import or nuclear body targeting. Sumoylation may stabilize the interaction with CBX5. In terms of processing, (Microbial infection) Immediate early protein IE1 of human cytomegalovirus (HHV-5) interferes with the sumoylation of SP100. Widely expressed. Sp100-B is expressed only in spleen, tonsil, thymus, mature B-cell line and some T-cell line, but not in brain, liver, muscle or non-lymphoid cell lines.

It is found in the nucleus. It localises to the PML body. The protein resides in the nuclear body. Its subcellular location is the cytoplasm. In terms of biological role, together with PML, this tumor suppressor is a major constituent of the PML bodies, a subnuclear organelle involved in a large number of physiological processes including cell growth, differentiation and apoptosis. Functions as a transcriptional coactivator of ETS1 and ETS2 according to PubMed:11909962. Under certain conditions, it may also act as a corepressor of ETS1 preventing its binding to DNA according to PubMed:15247905. Through the regulation of ETS1 it may play a role in angiogenesis, controlling endothelial cell motility and invasion. Through interaction with the MRN complex it may be involved in the regulation of telomeres lengthening. May also regulate TP53-mediated transcription and through CASP8AP2, regulate FAS-mediated apoptosis. Also plays a role in infection by viruses, including human cytomegalovirus and Epstein-Barr virus, through mechanisms that may involve chromatin and/or transcriptional regulation. In Homo sapiens (Human), this protein is Nuclear autoantigen Sp-100 (SP100).